The chain runs to 483 residues: NADPH:adrenodoxin oxidoreductase, mitochondrial (483 aa).

The transit peptide at Met1–Phe14 directs the protein to the mitochondrion. Residues Ala32, Asp53, Leu61, and Leu97 each contribute to the FAD site. NADP(+) contacts are provided by residues Gln169–Val172, Arg213–Arg214, and Glu225. Residues Trp391 and Gly398–Ile400 each bind FAD. NADP(+) is bound at residue Gly398.

Belongs to the ferredoxin--NADP reductase type 1 family. FAD serves as cofactor.

The protein localises to the mitochondrion. It catalyses the reaction 2 reduced [adrenodoxin] + NADP(+) + H(+) = 2 oxidized [adrenodoxin] + NADPH. Functionally, associates in vitro with the adrenodoxin-like protein MFDX1 to form an efficient low potential electron transfer chain that is able to reduce cytochrome C. Functions as accessory mitochondrial protein involved with BIO2 in the plant biotin synthase reaction. The sequence is that of NADPH:adrenodoxin oxidoreductase, mitochondrial from Arabidopsis thaliana (Mouse-ear cress).